The chain runs to 544 residues: Probable protein kinase UbiB (544 aa).

The Protein kinase domain occupies Asp123–Leu501. ATP-binding positions include Leu129 to Val137 and Lys152. Residue Asp287 is the Proton acceptor of the active site. The helical transmembrane segment at Leu515–Phe537 threads the bilayer.

This sequence belongs to the ABC1 family. UbiB subfamily.

Its subcellular location is the cell inner membrane. It functions in the pathway cofactor biosynthesis; ubiquinone biosynthesis [regulation]. In terms of biological role, is probably a protein kinase regulator of UbiI activity which is involved in aerobic coenzyme Q (ubiquinone) biosynthesis. This Aliivibrio fischeri (strain ATCC 700601 / ES114) (Vibrio fischeri) protein is Probable protein kinase UbiB.